Reading from the N-terminus, the 227-residue chain is Cytochrome c oxidase subunit 2 (227 aa).

At 1 to 14 (MAYPFQLGFQDATS) the chain is on the mitochondrial intermembrane side. Residues 15 to 45 (PIMEELLHFHDHTLMIVFLISSLVLYIISSM) form a helical membrane-spanning segment. The Mitochondrial matrix segment spans residues 46–59 (LTTKLTHTSTMDAQ). Residues 60–87 (EVETIWTILPAIILILIALPSLRILYMM) traverse the membrane as a helical segment. At 88–227 (DEINNPSLTV…YFEEWSASML (140 aa)) the chain is on the mitochondrial intermembrane side. The Cu cation site is built by His-161, Cys-196, Glu-198, Cys-200, His-204, and Met-207. Glu-198 is a Mg(2+) binding site.

The protein belongs to the cytochrome c oxidase subunit 2 family. As to quaternary structure, component of the cytochrome c oxidase (complex IV, CIV), a multisubunit enzyme composed of 14 subunits. The complex is composed of a catalytic core of 3 subunits MT-CO1, MT-CO2 and MT-CO3, encoded in the mitochondrial DNA, and 11 supernumerary subunits COX4I, COX5A, COX5B, COX6A, COX6B, COX6C, COX7A, COX7B, COX7C, COX8 and NDUFA4, which are encoded in the nuclear genome. The complex exists as a monomer or a dimer and forms supercomplexes (SCs) in the inner mitochondrial membrane with NADH-ubiquinone oxidoreductase (complex I, CI) and ubiquinol-cytochrome c oxidoreductase (cytochrome b-c1 complex, complex III, CIII), resulting in different assemblies (supercomplex SCI(1)III(2)IV(1) and megacomplex MCI(2)III(2)IV(2)). Found in a complex with TMEM177, COA6, COX18, COX20, SCO1 and SCO2. Interacts with TMEM177 in a COX20-dependent manner. Interacts with COX20. Interacts with COX16. Cu cation is required as a cofactor.

Its subcellular location is the mitochondrion inner membrane. The enzyme catalyses 4 Fe(II)-[cytochrome c] + O2 + 8 H(+)(in) = 4 Fe(III)-[cytochrome c] + 2 H2O + 4 H(+)(out). Its function is as follows. Component of the cytochrome c oxidase, the last enzyme in the mitochondrial electron transport chain which drives oxidative phosphorylation. The respiratory chain contains 3 multisubunit complexes succinate dehydrogenase (complex II, CII), ubiquinol-cytochrome c oxidoreductase (cytochrome b-c1 complex, complex III, CIII) and cytochrome c oxidase (complex IV, CIV), that cooperate to transfer electrons derived from NADH and succinate to molecular oxygen, creating an electrochemical gradient over the inner membrane that drives transmembrane transport and the ATP synthase. Cytochrome c oxidase is the component of the respiratory chain that catalyzes the reduction of oxygen to water. Electrons originating from reduced cytochrome c in the intermembrane space (IMS) are transferred via the dinuclear copper A center (CU(A)) of subunit 2 and heme A of subunit 1 to the active site in subunit 1, a binuclear center (BNC) formed by heme A3 and copper B (CU(B)). The BNC reduces molecular oxygen to 2 water molecules using 4 electrons from cytochrome c in the IMS and 4 protons from the mitochondrial matrix. This chain is Cytochrome c oxidase subunit 2 (MT-CO2), found in Equus asinus (Donkey).